The sequence spans 329 residues: Tetraacyldisaccharide 4'-kinase (329 aa).

58-65 (SVGGTGKT) is a binding site for ATP.

It belongs to the LpxK family.

The catalysed reaction is a lipid A disaccharide + ATP = a lipid IVA + ADP + H(+). It functions in the pathway glycolipid biosynthesis; lipid IV(A) biosynthesis; lipid IV(A) from (3R)-3-hydroxytetradecanoyl-[acyl-carrier-protein] and UDP-N-acetyl-alpha-D-glucosamine: step 6/6. Its function is as follows. Transfers the gamma-phosphate of ATP to the 4'-position of a tetraacyldisaccharide 1-phosphate intermediate (termed DS-1-P) to form tetraacyldisaccharide 1,4'-bis-phosphate (lipid IVA). This is Tetraacyldisaccharide 4'-kinase from Idiomarina loihiensis (strain ATCC BAA-735 / DSM 15497 / L2-TR).